Consider the following 471-residue polypeptide: Arginine biosynthesis bifunctional protein ArgJ, mitochondrial (471 aa).

Positions 201, 230, 241, 328, 466, and 471 each coordinate substrate. Thr-241 acts as the Nucleophile in catalysis.

Belongs to the ArgJ family. As to quaternary structure, heterodimer of an alpha and a beta chain. In terms of processing, the alpha and beta chains are autoproteolytically processed from a single precursor protein within the mitochondrion.

It is found in the mitochondrion matrix. It catalyses the reaction N(2)-acetyl-L-ornithine + L-glutamate = N-acetyl-L-glutamate + L-ornithine. It carries out the reaction L-glutamate + acetyl-CoA = N-acetyl-L-glutamate + CoA + H(+). It participates in amino-acid biosynthesis; L-arginine biosynthesis; L-ornithine and N-acetyl-L-glutamate from L-glutamate and N(2)-acetyl-L-ornithine (cyclic): step 1/1. Its pathway is amino-acid biosynthesis; L-arginine biosynthesis; N(2)-acetyl-L-ornithine from L-glutamate: step 1/4. Functionally, catalyzes two activities which are involved in the cyclic version of arginine biosynthesis: the synthesis of acetylglutamate from glutamate and acetyl-CoA, and of ornithine by transacetylation between acetylornithine and glutamate. The protein is Arginine biosynthesis bifunctional protein ArgJ, mitochondrial of Ajellomyces capsulatus (strain NAm1 / WU24) (Darling's disease fungus).